A 156-amino-acid chain; its full sequence is Ribosomal RNA large subunit methyltransferase H (156 aa).

Residues Leu-73, Gly-104, and 123-128 contribute to the S-adenosyl-L-methionine site; that span reads LSALTL.

Belongs to the RNA methyltransferase RlmH family. Homodimer.

Its subcellular location is the cytoplasm. The enzyme catalyses pseudouridine(1915) in 23S rRNA + S-adenosyl-L-methionine = N(3)-methylpseudouridine(1915) in 23S rRNA + S-adenosyl-L-homocysteine + H(+). In terms of biological role, specifically methylates the pseudouridine at position 1915 (m3Psi1915) in 23S rRNA. This chain is Ribosomal RNA large subunit methyltransferase H, found in Shewanella oneidensis (strain ATCC 700550 / JCM 31522 / CIP 106686 / LMG 19005 / NCIMB 14063 / MR-1).